Consider the following 129-residue polypeptide: Virion-associated protein (129 aa).

2 coiled-coil regions span residues 1–31 and 38–59; these read MANLNQIQKEVSEILSDQKSMKADIKAILEL and IKESLETVAAKIVNDLTKLIND. Residues 122-129 are capsid binding; the sequence is PAGWPNQY.

Belongs to the caulimovirus ORF III family. In terms of assembly, homotetramer, through coiled-coil domain. Homotrimer when interacts with icosehadral capsid. Interacts with capsid protein, and with Movement protein.

The protein localises to the virion. It is found in the host cell junction. The protein resides in the host plasmodesma. Plays a role in virus cell-to-cell and plant-to-plant transmission. Interacts with virion icosahedral capsid and movement protein, thereby facilitating virion cell-to-cell transmission through plasmodesmata opened by viral movement protein. Also interacts with aphid transmission factor, attaching the virion to aphid stylet when the animal feeds on an virus infected plant. Aphid saliva may later detach the virion, inducing release of infectious particles when the animal feeds on a new plant. This chain is Virion-associated protein, found in Cauliflower mosaic virus (strain D/H) (CaMV).